Reading from the N-terminus, the 197-residue chain is MLPELLFIVLLLLSYLIGSISTAIIVCKMFNLPDSRTQGSNNPGATNVLRIGGKKAAAITLIGDGLKGAIPVLIAHYLAFNMLNVTWVILVTFLGHVYPIFFSFKGGKGVATFLGALLALSYLTGLSFIITWVFVAKVLKISSLSALISTVLTPVYFYLITNNLASTYVIILICLWIFYTHQSNIKRLLNSQENKIN.

The next 5 membrane-spanning stretches (helical) occupy residues 6 to 26, 58 to 78, 82 to 102, 116 to 136, and 157 to 177; these read LFIV…AIIV, AITL…AHYL, MLNV…PIFF, ALLA…VFVA, and FYLI…CLWI.

The protein belongs to the PlsY family. As to quaternary structure, probably interacts with PlsX.

It localises to the cell inner membrane. It carries out the reaction an acyl phosphate + sn-glycerol 3-phosphate = a 1-acyl-sn-glycero-3-phosphate + phosphate. It participates in lipid metabolism; phospholipid metabolism. Catalyzes the transfer of an acyl group from acyl-phosphate (acyl-PO(4)) to glycerol-3-phosphate (G3P) to form lysophosphatidic acid (LPA). This enzyme utilizes acyl-phosphate as fatty acyl donor, but not acyl-CoA or acyl-ACP. In Ruthia magnifica subsp. Calyptogena magnifica, this protein is Glycerol-3-phosphate acyltransferase.